The following is a 143-amino-acid chain: Flagellar assembly factor FliW (143 aa).

It belongs to the FliW family. Interacts with translational regulator CsrA and flagellin(s).

The protein localises to the cytoplasm. In terms of biological role, acts as an anti-CsrA protein, binds CsrA and prevents it from repressing translation of its target genes, one of which is flagellin. Binds to flagellin and participates in the assembly of the flagellum. The protein is Flagellar assembly factor FliW of Clostridium botulinum (strain ATCC 19397 / Type A).